Consider the following 531-residue polypeptide: Basal body-orientation factor 1 (531 aa).

Over residues 1-19 the composition is skewed to basic residues; it reads MPKLKVKAGKGKKGKRKKA. The tract at residues 1 to 32 is disordered; that stretch reads MPKLKVKAGKGKKGKRKKAGKNEHRLDKESEV. Residues 20–32 show a composition bias toward basic and acidic residues; that stretch reads GKNEHRLDKESEV. 2 coiled-coil regions span residues 26–213 and 274–365; these read LDKE…AEKA and VQEK…VESF. A disordered region spans residues 465 to 505; the sequence is QSRKSPGLKPSPPADVSSIKEKEINTSNLEEKPEESSSTFI. The segment covering 482–499 has biased composition (basic and acidic residues); that stretch reads SIKEKEINTSNLEEKPEE.

The protein belongs to the BBOF1 family. As to expression, multiciliated cells.

It localises to the cytoplasm. The protein localises to the cytoskeleton. It is found in the cilium basal body. Functionally, basal body protein required in multiciliate cells to align and maintain cilia orientation in response to flow. May act by mediating a maturation step that stabilizes and aligns cilia orientation. Not required to respond to planar cell polarity (PCP) or flow-based orientation cues. The chain is Basal body-orientation factor 1 (ccdc176) from Xenopus laevis (African clawed frog).